We begin with the raw amino-acid sequence, 343 residues long: Dihydroorotase (343 aa).

Zn(2+) is bound by residues His-13 and His-15. Substrate is bound by residues 15 to 17 and Asn-41; that span reads HLR. Lys-99, His-136, and His-174 together coordinate Zn(2+). An N6-carboxylysine modification is found at Lys-99. Position 136 (His-136) interacts with substrate. Leu-219 contributes to the substrate binding site. Asp-247 is a Zn(2+) binding site. Asp-247 is an active-site residue. Residues His-251 and Ala-263 each coordinate substrate.

It belongs to the metallo-dependent hydrolases superfamily. DHOase family. Class II DHOase subfamily. In terms of assembly, homodimer. Zn(2+) is required as a cofactor.

The catalysed reaction is (S)-dihydroorotate + H2O = N-carbamoyl-L-aspartate + H(+). The protein operates within pyrimidine metabolism; UMP biosynthesis via de novo pathway; (S)-dihydroorotate from bicarbonate: step 3/3. Its function is as follows. Catalyzes the reversible cyclization of carbamoyl aspartate to dihydroorotate. The polypeptide is Dihydroorotase (Shewanella baltica (strain OS195)).